The sequence spans 145 residues: Nucleoside diphosphate kinase (145 aa).

ATP contacts are provided by Lys-11, Phe-59, Arg-87, Thr-93, Arg-104, and Asn-114. His-117 functions as the Pros-phosphohistidine intermediate in the catalytic mechanism.

Belongs to the NDK family. Requires Mg(2+) as cofactor.

The protein localises to the cytoplasm. The catalysed reaction is a 2'-deoxyribonucleoside 5'-diphosphate + ATP = a 2'-deoxyribonucleoside 5'-triphosphate + ADP. The enzyme catalyses a ribonucleoside 5'-diphosphate + ATP = a ribonucleoside 5'-triphosphate + ADP. In terms of biological role, major role in the synthesis of nucleoside triphosphates other than ATP. The ATP gamma phosphate is transferred to the NDP beta phosphate via a ping-pong mechanism, using a phosphorylated active-site intermediate. The protein is Nucleoside diphosphate kinase of Sulfolobus acidocaldarius (strain ATCC 33909 / DSM 639 / JCM 8929 / NBRC 15157 / NCIMB 11770).